The following is a 270-amino-acid chain: Malonyl-[acyl-carrier protein] O-methyltransferase (270 aa).

It belongs to the methyltransferase superfamily.

It carries out the reaction malonyl-[ACP] + S-adenosyl-L-methionine = malonyl-[ACP] methyl ester + S-adenosyl-L-homocysteine. Its pathway is cofactor biosynthesis; biotin biosynthesis. Its function is as follows. Converts the free carboxyl group of a malonyl-thioester to its methyl ester by transfer of a methyl group from S-adenosyl-L-methionine (SAM). It allows to synthesize pimeloyl-ACP via the fatty acid synthetic pathway. In Marinomonas sp. (strain MWYL1), this protein is Malonyl-[acyl-carrier protein] O-methyltransferase.